Consider the following 242-residue polypeptide: Mediator of RNA polymerase II transcription subunit 19-A (242 aa).

A compositionally biased stretch (polar residues) spans 1 to 15 (MTEIFSTLFGQNDAQ). Disordered regions lie at residues 1 to 33 (MTEI…PPPS) and 171 to 242 (PPKK…NSLR). The segment covering 171-184 (PPKKKSKHKHRHHH) has biased composition (basic residues). Over residues 193-210 (TRTDPTKKKKKKDNEPER) the composition is skewed to basic and acidic residues. The segment covering 211 to 223 (RKKKKDKKKKKNR) has biased composition (basic residues). Over residues 232–242 (TGSQPNSNSLR) the composition is skewed to polar residues.

This sequence belongs to the Mediator complex subunit 19 family. Component of the Mediator complex.

The protein resides in the nucleus. Component of the Mediator complex, a coactivator involved in the regulated transcription of nearly all RNA polymerase II-dependent genes. Mediator functions as a bridge to convey information from gene-specific regulatory proteins to the basal RNA polymerase II transcription machinery. Mediator is recruited to promoters by direct interactions with regulatory proteins and serves as a scaffold for the assembly of a functional preinitiation complex with RNA polymerase II and the general transcription factors. This is Mediator of RNA polymerase II transcription subunit 19-A (med19a) from Danio rerio (Zebrafish).